The primary structure comprises 264 residues: Putative hydro-lyase Cgl2544/cg2803 (264 aa).

Belongs to the D-glutamate cyclase family.

This Corynebacterium glutamicum (strain ATCC 13032 / DSM 20300 / JCM 1318 / BCRC 11384 / CCUG 27702 / LMG 3730 / NBRC 12168 / NCIMB 10025 / NRRL B-2784 / 534) protein is Putative hydro-lyase Cgl2544/cg2803.